A 706-amino-acid chain; its full sequence is MSSDTSPAVVTTPPPPSMPHKERYFDRINESDPEYLRERNMSPDLRQDFNMMEQRKRVTQILQSPAFREDLECLIQEQMKKGHNPSGLLALQQIADYIVTSSFSGFSSPSLSLGMVTPINDLPGADTSSYVKGEKLTRCKLASLYRLADLFGWAHLANTYISVRISKEQDHIIIIPRGLSFSEATASTLVKVNIIGEVVDQGSTDLKIDHTGFSPHAAIYSTRPDVKCVIHIHTLATAAVSSMKCGILPISQESLILGDVAYYDYQGSLDEEEERIELQKVLGPSCKVLVLRNHGMVALGETLEEAFHYIFNVQMACEIQVQAVAGAGGVDNLLVLDLQKYKAFTHGVAMSGGGGVNMASHQKWKVGEIEFEGLMRTLDNLGYRTGYAYRHPLVREKPRHKSDVEIPATVTAFSFEDDSAPLSPLKFMAQRQQREKTRWLNSPNTYMKVNVPEESRNGETSPRTKITWMKAEDSSKVSSGTPIKIEDPNQFVPLNTNPTEVLEKRNKIREQNRYDLKTAGPQSQLLAGIVVDKPPSTMQFDDDDQGPPAPPNPFSHLLEGELEEYTKTIERKQQGLDDAEQGSLSDDAASVSQIQSQTQSPQSVPERLEENHELFSKSFTSMDAPVMIMNGKDEMHDVEDELAQRVSRLTTSTTIENIEITIKSPERTEEVLSPDGSPSKSPSKKKKKFRTPSFLKKNKKKEKVEA.

Residues 1–11 (MSSDTSPAVVT) show a composition bias toward low complexity. The disordered stretch occupies residues 1–23 (MSSDTSPAVVTTPPPPSMPHKER). Residue Ser2 is modified to N-acetylserine. Phosphoserine occurs at positions 31, 42, 64, 402, 414, 423, 442, and 461. Disordered regions lie at residues 471 to 495 (AEDS…VPLN), 534 to 556 (PPST…PFSH), 574 to 610 (QGLD…RLEE), and 651 to 706 (TSTT…KVEA). Residue Lys484 forms a Glycyl lysine isopeptide (Lys-Gly) (interchain with G-Cter in SUMO2) linkage. Ser583, Ser585, and Ser590 each carry phosphoserine. 2 stretches are compositionally biased toward low complexity: residues 590–605 (SVSQ…QSVP) and 651–662 (TSTTIENIEITI). A phosphoserine mark is found at Ser673, Ser677, Ser679, Ser681, and Ser683. Over residues 682–706 (PSKKKKKFRTPSFLKKNKKKEKVEA) the composition is skewed to basic residues. The tract at residues 684–701 (KKKKKFRTPSFLKKNKKK) is interaction with calmodulin.

Belongs to the aldolase class II family. Adducin subfamily. As to quaternary structure, heterodimer of an alpha and a gamma subunit. Sumoylated. In terms of processing, proteolytically cleaved by asparagine endopeptidase (AEP) into 2 fragments. Overexpression of the 1-357 fragment induces neuronal apoptosis, and overexpression of either 1-357 or 358-706 fragment increases the degeneration of dendritic spines. Overexpression of the 1-357 fragment impairs neurite outgrowth by downregulating the expression of Rac2, and induces synaptic dysfunction and cognitive impairments in tau P301S transgenic mice, a mouse model for Alzheimer disease (AD). Cleavage fragment 1-357 is expressed in the brain and the expression increases with age (at protein level). The fragment is expressed in the cortex, hippocampal CA1 region and hippocampal dentate gyrus in tau P301S transgenic mice, a mouse model for Alzheimer disease (AD) (at protein level). The fragment is only weakly expressed in non-transgenic mouse brain sections (at protein level).

The protein localises to the cytoplasm. The protein resides in the cytoskeleton. It is found in the cell membrane. Functionally, membrane-cytoskeleton-associated protein that promotes the assembly of the spectrin-actin network. Plays a role in actin filament capping. Binds to calmodulin. Involved in myogenic reactivity of the renal afferent arteriole (Af-art), renal interlobular arteries and middle cerebral artery (MCA) to increased perfusion pressure. Involved in regulation of potassium channels in the vascular smooth muscle cells (VSMCs) of the Af-art and MCA ex vivo. Involved in regulation of glomerular capillary pressure, glomerular filtration rate (GFR) and glomerular nephrin expression in response to hypertension. Involved in renal blood flow (RBF) autoregulation. Plays a role in podocyte structure and function. Regulates globular monomer actin (G-actin) and filamentous polymer actin (F-actin) ratios in the primary podocytes affecting actin cytoskeleton organization. Regulates expression of synaptopodin, RhoA, Rac1 and CDC42 in the renal cortex and the primary podocytes. Regulates expression of nephrin in the glomeruli and in the primary podocytes, expression of nephrin and podocinin in the renal cortex, and expression of focal adhesion proteins integrin alpha-3 and integrin beta-1 in the glomeruli. Involved in cell migration and cell adhesion of podocytes, and in podocyte foot process effacement. Regulates expression of profibrotics markers MMP2, MMP9, TGF beta-1, tubular tight junction protein E-cadherin, and mesenchymal markers vimentin and alpha-SMA. Promotes the growth of neurites. This Mus musculus (Mouse) protein is Gamma-adducin (Add3).